The chain runs to 873 residues: Coatomer subunit gamma-2 (873 aa).

Over residues 1 to 11 the composition is skewed to basic and acidic residues; that stretch reads MIKKFDKKDEE. The interval 1-21 is disordered; that stretch reads MIKKFDKKDEESGSGSNPFQH. HEAT repeat units lie at residues 64-101, 283-320, 321-355, 356-392, 395-430, and 467-504; these read TEAT…ISED, RELA…KHPS, AVTA…GSES, SVDR…KYPR, SVMM…ENPE, and PTPS…QNDD.

The protein belongs to the COPG family. Oligomeric complex.

It localises to the cytoplasm. Its subcellular location is the golgi apparatus membrane. It is found in the cytoplasmic vesicle. The protein resides in the COPI-coated vesicle membrane. Its function is as follows. The coatomer is a cytosolic protein complex that binds to dilysine motifs and reversibly associates with Golgi non-clathrin-coated vesicles, which further mediate biosynthetic protein transport from the ER, via the Golgi up to the trans Golgi network. Coatomer complex is required for budding from Golgi membranes, and is essential for the retrograde Golgi-to-ER transport of dilysine-tagged proteins. This is Coatomer subunit gamma-2 (copg2) from Danio rerio (Zebrafish).